The chain runs to 474 residues: ATP synthase subunit beta (474 aa).

Gly-152 to Thr-159 contacts ATP.

This sequence belongs to the ATPase alpha/beta chains family. As to quaternary structure, F-type ATPases have 2 components, CF(1) - the catalytic core - and CF(0) - the membrane proton channel. CF(1) has five subunits: alpha(3), beta(3), gamma(1), delta(1), epsilon(1). CF(0) has four main subunits: a(1), b(1), b'(1) and c(9-12).

The protein resides in the cell inner membrane. It carries out the reaction ATP + H2O + 4 H(+)(in) = ADP + phosphate + 5 H(+)(out). In terms of biological role, produces ATP from ADP in the presence of a proton gradient across the membrane. The catalytic sites are hosted primarily by the beta subunits. This is ATP synthase subunit beta from Rhodospirillum rubrum (strain ATCC 11170 / ATH 1.1.1 / DSM 467 / LMG 4362 / NCIMB 8255 / S1).